We begin with the raw amino-acid sequence, 310 residues long: Cytosolic Fe-S cluster assembly factor Nubp1 homolog (310 aa).

[4Fe-4S] cluster contacts are provided by Cys-8, Cys-22, Cys-25, and Cys-31. 62 to 69 (GKGGVGKS) lines the ATP pocket. 2 residues coordinate [4Fe-4S] cluster: Cys-239 and Cys-242.

It belongs to the Mrp/NBP35 ATP-binding proteins family. NUBP1/NBP35 subfamily. Heterotetramer of 2 Nubp1 and 2 Nubp2 chains. The cofactor is [4Fe-4S] cluster.

The protein localises to the cytoplasm. Its function is as follows. Component of the cytosolic iron-sulfur (Fe/S) protein assembly (CIA) machinery. Required for maturation of extramitochondrial Fe-S proteins. The Nubp1-Nubp2 heterotetramer forms a Fe-S scaffold complex, mediating the de novo assembly of an Fe-S cluster and its transfer to target apoproteins. In Drosophila ananassae (Fruit fly), this protein is Cytosolic Fe-S cluster assembly factor Nubp1 homolog.